Consider the following 259-residue polypeptide: Electron transfer flavoprotein subunit beta (259 aa).

Belongs to the ETF beta-subunit/FixA family. In terms of assembly, heterodimer of an alpha and a beta subunit. FAD is required as a cofactor. It depends on AMP as a cofactor.

The electron transfer flavoprotein serves as a specific electron acceptor for other dehydrogenases. It transfers the electrons to the main respiratory chain via ETF-ubiquinone oxidoreductase (ETF dehydrogenase). The protein is Electron transfer flavoprotein subunit beta (etfB) of Clostridium acetobutylicum (strain ATCC 824 / DSM 792 / JCM 1419 / IAM 19013 / LMG 5710 / NBRC 13948 / NRRL B-527 / VKM B-1787 / 2291 / W).